Consider the following 313-residue polypeptide: Ribosomal RNA small subunit methyltransferase H (313 aa).

Residues 35–37 (GGH), Asp55, Phe79, Asp101, and Gln108 contribute to the S-adenosyl-L-methionine site.

Belongs to the methyltransferase superfamily. RsmH family.

The protein localises to the cytoplasm. The enzyme catalyses cytidine(1402) in 16S rRNA + S-adenosyl-L-methionine = N(4)-methylcytidine(1402) in 16S rRNA + S-adenosyl-L-homocysteine + H(+). Functionally, specifically methylates the N4 position of cytidine in position 1402 (C1402) of 16S rRNA. The polypeptide is Ribosomal RNA small subunit methyltransferase H (Klebsiella pneumoniae subsp. pneumoniae (strain ATCC 700721 / MGH 78578)).